The sequence spans 466 residues: tRNA(Ile)-lysidine synthase (466 aa).

42–47 (SGGVDS) contributes to the ATP binding site.

It belongs to the tRNA(Ile)-lysidine synthase family.

It is found in the cytoplasm. It carries out the reaction cytidine(34) in tRNA(Ile2) + L-lysine + ATP = lysidine(34) in tRNA(Ile2) + AMP + diphosphate + H(+). Ligates lysine onto the cytidine present at position 34 of the AUA codon-specific tRNA(Ile) that contains the anticodon CAU, in an ATP-dependent manner. Cytidine is converted to lysidine, thus changing the amino acid specificity of the tRNA from methionine to isoleucine. This chain is tRNA(Ile)-lysidine synthase, found in Anaplasma marginale (strain St. Maries).